A 267-amino-acid chain; its full sequence is Probable proteasome subunit beta type-2 (267 aa).

A propeptide spans 1 to 35 (removed in mature form); sequence MMGINERKGFDFEYYQRNLLLQEKGFPTPKATSTG. Thr-36 functions as the Nucleophile in the catalytic mechanism.

The protein belongs to the peptidase T1B family. As to quaternary structure, the 26S proteasome consists of a 20S proteasome core and two 19S regulatory subunits. The 20S proteasome core is composed of 28 subunits that are arranged in four stacked rings, resulting in a barrel-shaped structure. The two end rings are each formed by seven alpha subunits, and the two central rings are each formed by seven beta subunits. The catalytic chamber with the active sites is on the inside of the barrel.

The protein resides in the cytoplasm. It localises to the nucleus. It carries out the reaction Cleavage of peptide bonds with very broad specificity.. In terms of biological role, the proteasome is a multicatalytic proteinase complex which is characterized by its ability to cleave peptides with Arg, Phe, Tyr, Leu, and Glu adjacent to the leaving group at neutral or slightly basic pH. The proteasome has an ATP-dependent proteolytic activity (Potential). In Schizosaccharomyces pombe (strain 972 / ATCC 24843) (Fission yeast), this protein is Probable proteasome subunit beta type-2 (pup1).